A 314-amino-acid polypeptide reads, in one-letter code: Olfactory receptor 5D14 (314 aa).

Over 1-27 (MMMVLRNLSMEPTFALLGFTDYPKLQI) the chain is Extracellular. N7 carries an N-linked (GlcNAc...) asparagine glycan. The chain crosses the membrane as a helical span at residues 28-48 (PLFLVFLLMYVITVVGNLGMI). Residues 49–56 (IIIKINPK) lie on the Cytoplasmic side of the membrane. The helical transmembrane segment at 57 to 77 (FHTPMYFFLSHLSFVDFCYSS) threads the bilayer. Topologically, residues 78-101 (IVTPKLLENLVMADKSIFYFSCMM) are extracellular. A helical transmembrane segment spans residues 102–122 (QYFLSCTAVVTESFLLAVMAY). Over 123 to 141 (DRFVAICNPLLYTVAMSQR) the chain is Cytoplasmic. The helical transmembrane segment at 142-162 (LCALLVAGSYLWGMFGPLVLL) threads the bilayer. Over 163 to 198 (CYALRLNFSGPNVINHFFCEYTALISVSGSDILIPH) the chain is Extracellular. N-linked (GlcNAc...) asparagine glycosylation is present at N169. Residues 199–219 (LLLFSFATFNEMCTLLIILTS) form a helical membrane-spanning segment. Topologically, residues 220 to 239 (YVFIFVTVLKIRSVSGRHKA) are cytoplasmic. A helical membrane pass occupies residues 240–260 (FSTWASHLTSITIFHGTILFL). Residues 261-273 (YCVPNSKNSRQTV) are Extracellular-facing. Residues 274–294 (KVASVFYTVVNPMLNPLIYSL) form a helical membrane-spanning segment. Residues 295–314 (RNKDVKDAFWKLIHTQVPFH) lie on the Cytoplasmic side of the membrane.

This sequence belongs to the G-protein coupled receptor 1 family.

The protein localises to the cell membrane. Functionally, odorant receptor. The chain is Olfactory receptor 5D14 (OR5D14) from Homo sapiens (Human).